The following is an 866-amino-acid chain: Protein mono-ADP-ribosyltransferase PARP9 (866 aa).

A Phosphoserine modification is found at serine 42. Macro domains follow at residues 109–298 (QRVF…ESIL) and 313–492 (ASTM…TKRS). One can recognise a PARP catalytic domain in the interval 635-853 (TNQQEKLDKM…YSSGPGMVSS (219 aa)).

The protein belongs to the ARTD/PARP family. Forms a stable complex with E3 ligase DTX3L; the interaction is required for PARP9 mediated ADP-ribosylation of ubiquitin. Interacts (via PARP catalytic domain) with DTX3L (via N-terminus). Forms a complex with STAT1 and DTX3L independently of IFNB1 or IFNG-mediated STAT1 'Tyr-701' phosphorylation. Forms a complex with STAT1, DTX3L and histone H2B H2BC9/H2BJ; the interaction is likely to induce H2BC9/H2BJ ubiquitination. Interacts (via N-terminus) with STAT1. Interacts with PARP14 in IFNG-stimulated macrophages; the interaction prevents PARP14-mediated STAT1 and STAT6 ADP-riboslylation. Interacts with PARP1 (when poly-ADP-ribosylated). In terms of processing, ADP-ribosylated by PARP14. Highly expressed in the thymus and intestine. Expressed in macrophages.

The protein resides in the cytoplasm. It localises to the cytosol. It is found in the nucleus. The catalysed reaction is [protein]-C-terminal glycine + NAD(+) = [protein]-C-terminal O-(ADP-D-ribosyl)-glycine + nicotinamide. Binding to poly(ADP-ribose) does not affect its activity. Functionally, ADP-ribosyltransferase which, in association with E3 ligase DTX3L, plays a role in DNA damage repair and in immune responses including interferon-mediated antiviral defenses. Within the complex, enhances DTX3L E3 ligase activity which is further enhanced by PARP9 binding to poly(ADP-ribose). In addition, positively regulates DTXL3 protein levels. In association with DTX3L and in presence of E1 and E2 enzymes, mediates NAD(+)-dependent mono-ADP-ribosylation of ubiquitin which prevents ubiquitin conjugation to substrates such as histones. During DNA repair, PARP1 recruits PARP9/BAL1-DTX3L complex to DNA damage sites via PARP9 binding to ribosylated PARP1. Subsequent PARP1-dependent PARP9/BAL1-DTX3L-mediated ubiquitination promotes the rapid and specific recruitment of 53BP1/TP53BP1, UIMC1/RAP80, and BRCA1 to DNA damage sites. In response to DNA damage, PARP9-DTX3L complex is required for efficient non-homologous end joining (NHEJ) but the complex function is restrained by PARP9 activity. Dispensable for B-cell receptor (BCR) assembly through V(D)J recombination and class switch recombination (CSR). In macrophages, positively regulates pro-inflammatory cytokines production in response to IFNG stimulation by suppressing PARP14-mediated STAT1 ADP-ribosylation and thus promoting STAT1 phosphorylation. Also suppresses PARP14-mediated STAT6 ADP-ribosylation. The chain is Protein mono-ADP-ribosyltransferase PARP9 (Parp9) from Mus musculus (Mouse).